Reading from the N-terminus, the 294-residue chain is Phosphatidylglycerol--prolipoprotein diacylglyceryl transferase (294 aa).

7 helical membrane-spanning segments follow: residues Val-19–Leu-39, Leu-69–Tyr-89, Ile-101–Ala-121, Ile-139–Ala-159, Gln-195–Trp-215, Gly-224–Phe-244, and Trp-267–Ile-287. Arg-152 lines the a 1,2-diacyl-sn-glycero-3-phospho-(1'-sn-glycerol) pocket.

The protein belongs to the Lgt family.

It is found in the cell inner membrane. It catalyses the reaction L-cysteinyl-[prolipoprotein] + a 1,2-diacyl-sn-glycero-3-phospho-(1'-sn-glycerol) = an S-1,2-diacyl-sn-glyceryl-L-cysteinyl-[prolipoprotein] + sn-glycerol 1-phosphate + H(+). The protein operates within protein modification; lipoprotein biosynthesis (diacylglyceryl transfer). In terms of biological role, catalyzes the transfer of the diacylglyceryl group from phosphatidylglycerol to the sulfhydryl group of the N-terminal cysteine of a prolipoprotein, the first step in the formation of mature lipoproteins. This is Phosphatidylglycerol--prolipoprotein diacylglyceryl transferase from Roseobacter denitrificans (strain ATCC 33942 / OCh 114) (Erythrobacter sp. (strain OCh 114)).